Here is a 738-residue protein sequence, read N- to C-terminus: Melanotransferrin (738 aa).

The N-terminal stretch at 1 to 19 (MRGPSGALWLLLALRTVLG) is a signal peptide. The tract at residues 20 to 30 (GMEVRWCATSD) is antigenic epitope. 2 consecutive Transferrin-like domains span residues 23–357 (VRWC…GLLC) and 366–706 (LRWC…GMSS). Disulfide bonds link Cys26–Cys63 and Cys36–Cys54. Asn38 carries N-linked (GlcNAc...) asparagine glycosylation. Fe(3+) contacts are provided by Asp78 and Tyr107. Cystine bridges form between Cys130–Cys216, Cys172–Cys189, Cys186–Cys199, and Cys257–Cys271. Residue Thr132 participates in hydrogencarbonate binding. Asn135 carries an N-linked (GlcNAc...) asparagine glycan. Residues Arg136, Val138, and Gly139 each contribute to the hydrogencarbonate site. Tyr210 is a binding site for Fe(3+). 3 residues coordinate Fe(3+): His279, Ser421, and Tyr451. Ser462 bears the Phosphoserine; by FAM20C mark. N-linked (GlcNAc...) asparagine glycosylation is present at Asn515. Fe(3+)-binding residues include Tyr556 and His625. Cys709 carries the GPI-anchor amidated cysteine lipid modification. The propeptide at 710–738 (SGAAAPAPGAPLLPLLLPALAARLLPPAL) is removed in mature form.

The protein belongs to the transferrin family. As to expression, found predominantly in human melanomas and in certain fetal tissues; also found in liver, epithelium, umbilical chord, placenta and sweat gland ducts.

Its subcellular location is the cell membrane. Its function is as follows. Involved in iron cellular uptake. Seems to be internalized and then recycled back to the cell membrane. Binds a single atom of iron per subunit. Could also bind zinc. The chain is Melanotransferrin from Homo sapiens (Human).